The following is a 396-amino-acid chain: Phosphoglycerate kinase (396 aa).

Residues Asp21–Asn23, Arg36, His59–Lys62, Arg119, and Arg156 each bind substrate. ATP is bound by residues Lys206, Glu325, and Gly352–Ser355.

The protein belongs to the phosphoglycerate kinase family. As to quaternary structure, monomer.

It is found in the cytoplasm. The enzyme catalyses (2R)-3-phosphoglycerate + ATP = (2R)-3-phospho-glyceroyl phosphate + ADP. The protein operates within carbohydrate degradation; glycolysis; pyruvate from D-glyceraldehyde 3-phosphate: step 2/5. The sequence is that of Phosphoglycerate kinase from Staphylococcus saprophyticus subsp. saprophyticus (strain ATCC 15305 / DSM 20229 / NCIMB 8711 / NCTC 7292 / S-41).